A 130-amino-acid polypeptide reads, in one-letter code: Fumarate reductase subunit C (130 aa).

3 helical membrane-spanning segments follow: residues 37-57, 60-80, and 109-129; these read VWFS…PAGW, FVGF…LLAA, and VIKA…AVAL.

It belongs to the FrdC family. In terms of assembly, part of an enzyme complex containing four subunits: a flavoprotein (FrdA), an iron-sulfur protein (FrdB), and two hydrophobic anchor proteins (FrdC and FrdD).

Its subcellular location is the cell inner membrane. In terms of biological role, two distinct, membrane-bound, FAD-containing enzymes are responsible for the catalysis of fumarate and succinate interconversion; fumarate reductase is used in anaerobic growth, and succinate dehydrogenase is used in aerobic growth. Anchors the catalytic components of the fumarate reductase complex to the cell inner membrane, binds quinones. The sequence is that of Fumarate reductase subunit C from Yersinia enterocolitica serotype O:8 / biotype 1B (strain NCTC 13174 / 8081).